The sequence spans 144 residues: Large ribosomal subunit protein uL11 (144 aa).

The protein belongs to the universal ribosomal protein uL11 family. As to quaternary structure, part of the ribosomal stalk of the 50S ribosomal subunit. Interacts with L10 and the large rRNA to form the base of the stalk. L10 forms an elongated spine to which L12 dimers bind in a sequential fashion forming a multimeric L10(L12)X complex. Post-translationally, one or more lysine residues are methylated.

Its function is as follows. Forms part of the ribosomal stalk which helps the ribosome interact with GTP-bound translation factors. This chain is Large ribosomal subunit protein uL11, found in Parafrankia sp. (strain EAN1pec).